The primary structure comprises 189 residues: Ion-translocating oxidoreductase complex subunit B (189 aa).

The tract at residues 1–26 (MSAVMIAVVLLGLLALVFGAILGFAA) is hydrophobic. Residues 32-90 (EGDPLVDQVESLLPQTQCGQCGYPGCRPYAEAIAGGDQINKCPPGGTATMEKIAELMGV) form the 4Fe-4S domain. [4Fe-4S] cluster is bound by residues C49, C52, C57, C73, C114, C117, C120, C124, C144, C147, C150, and C154. 4Fe-4S ferredoxin-type domains follow at residues 105 to 134 (KVAY…GAGK) and 136 to 164 (MHTV…MLPV).

This sequence belongs to the 4Fe4S bacterial-type ferredoxin family. RnfB subfamily. The complex is composed of six subunits: RnfA, RnfB, RnfC, RnfD, RnfE and RnfG. The cofactor is [4Fe-4S] cluster.

It is found in the cell inner membrane. In terms of biological role, part of a membrane-bound complex that couples electron transfer with translocation of ions across the membrane. The chain is Ion-translocating oxidoreductase complex subunit B from Shewanella amazonensis (strain ATCC BAA-1098 / SB2B).